The primary structure comprises 831 residues: Translation initiation factor IF-2 (831 aa).

Residues 329-499 form the tr-type G domain; it reads TRAPVVTVMG…LLISEMQDLK (171 aa). Positions 338-345 are G1; it reads GHVDHGKT. 338–345 contacts GTP; it reads GHVDHGKT. Residues 363–367 form a G2 region; it reads GITQH. A G3 region spans residues 385–388; that stretch reads DTPG. Residues 385-389 and 439-442 contribute to the GTP site; these read DTPGH and NKID. Residues 439 to 442 form a G4 region; it reads NKID. The G5 stretch occupies residues 475–477; the sequence is SAL.

The protein belongs to the TRAFAC class translation factor GTPase superfamily. Classic translation factor GTPase family. IF-2 subfamily.

It localises to the cytoplasm. One of the essential components for the initiation of protein synthesis. Protects formylmethionyl-tRNA from spontaneous hydrolysis and promotes its binding to the 30S ribosomal subunits. Also involved in the hydrolysis of GTP during the formation of the 70S ribosomal complex. The protein is Translation initiation factor IF-2 (infB) of Rickettsia prowazekii (strain Madrid E).